The following is a 538-amino-acid chain: Chaperonin GroEL 1 (538 aa).

ATP contacts are provided by residues 29 to 32, 86 to 90, Gly413, and Asp494; these read TLGP and DGTTT.

It belongs to the chaperonin (HSP60) family. In terms of assembly, forms a cylinder of 14 subunits composed of two heptameric rings stacked back-to-back. Interacts with the co-chaperonin GroES.

The protein localises to the cytoplasm. The catalysed reaction is ATP + H2O + a folded polypeptide = ADP + phosphate + an unfolded polypeptide.. Functionally, together with its co-chaperonin GroES, plays an essential role in assisting protein folding. The GroEL-GroES system forms a nano-cage that allows encapsulation of the non-native substrate proteins and provides a physical environment optimized to promote and accelerate protein folding. In Mycolicibacterium paratuberculosis (strain ATCC BAA-968 / K-10) (Mycobacterium paratuberculosis), this protein is Chaperonin GroEL 1.